The sequence spans 277 residues: 3-methyl-2-oxobutanoate hydroxymethyltransferase (277 aa).

2 residues coordinate Mg(2+): Asp43 and Asp82. Residues 43 to 44, Asp82, and Lys112 each bind 3-methyl-2-oxobutanoate; that span reads DS. Glu114 serves as a coordination point for Mg(2+). The Proton acceptor role is filled by Glu181.

The protein belongs to the PanB family. Homodecamer; pentamer of dimers. Mg(2+) serves as cofactor.

Its subcellular location is the cytoplasm. It catalyses the reaction 3-methyl-2-oxobutanoate + (6R)-5,10-methylene-5,6,7,8-tetrahydrofolate + H2O = 2-dehydropantoate + (6S)-5,6,7,8-tetrahydrofolate. It participates in cofactor biosynthesis; (R)-pantothenate biosynthesis; (R)-pantoate from 3-methyl-2-oxobutanoate: step 1/2. Catalyzes the reversible reaction in which hydroxymethyl group from 5,10-methylenetetrahydrofolate is transferred onto alpha-ketoisovalerate to form ketopantoate. The chain is 3-methyl-2-oxobutanoate hydroxymethyltransferase from Listeria monocytogenes serotype 4a (strain HCC23).